The sequence spans 364 residues: Large ribosomal subunit protein uL22m (364 aa).

This sequence belongs to the universal ribosomal protein uL22 family. Component of the mitochondrial large ribosomal subunit (mt-LSU). Mature N.crassa 74S mitochondrial ribosomes consist of a small (37S) and a large (54S) subunit. The 37S small subunit contains a 16S ribosomal RNA (16S mt-rRNA) and 32 different proteins. The 54S large subunit contains a 23S rRNA (23S mt-rRNA) and 42 different proteins. uL22m forms the wall of the exit tunnel.

The protein localises to the mitochondrion. In terms of biological role, component of the mitochondrial ribosome (mitoribosome), a dedicated translation machinery responsible for the synthesis of mitochondrial genome-encoded proteins, including at least some of the essential transmembrane subunits of the mitochondrial respiratory chain. The mitoribosomes are attached to the mitochondrial inner membrane and translation products are cotranslationally integrated into the membrane. The polypeptide is Large ribosomal subunit protein uL22m (mrpl22) (Neurospora crassa (strain ATCC 24698 / 74-OR23-1A / CBS 708.71 / DSM 1257 / FGSC 987)).